The following is a 338-amino-acid chain: 1-aminocyclopropane-1-carboxylate deaminase (338 aa).

Lys-51 bears the N6-(pyridoxal phosphate)lysine mark. Ser-78 (nucleophile) is an active-site residue.

The protein belongs to the ACC deaminase/D-cysteine desulfhydrase family. Homotrimer. The cofactor is pyridoxal 5'-phosphate.

It carries out the reaction 1-aminocyclopropane-1-carboxylate + H2O = 2-oxobutanoate + NH4(+). Catalyzes a cyclopropane ring-opening reaction, the irreversible conversion of 1-aminocyclopropane-1-carboxylate (ACC) to ammonia and alpha-ketobutyrate. Allows growth on ACC as a nitrogen source. This Burkholderia ambifaria (strain ATCC BAA-244 / DSM 16087 / CCUG 44356 / LMG 19182 / AMMD) (Burkholderia cepacia (strain AMMD)) protein is 1-aminocyclopropane-1-carboxylate deaminase.